An 809-amino-acid chain; its full sequence is 3',5'-cyclic-AMP phosphodiesterase 4D (809 aa).

The disordered stretch occupies residues 1–107 (MEAEGSSAPA…SGATGRVRHR (107 aa)). A phosphoserine mark is found at H54, P59, and P63. The segment covering 58–89 (PPPPPPSPQPQPQCPLQPPPPPPLPPPPPPPG) has biased composition (pro residues). Positions 90 to 102 (AARGRYASSGATG) are enriched in low complexity. A phosphoserine mark is found at S142, S299, S301, S348, and S375. The segment at 343–364 (EVEIPSPTQKEKEKKKRPMSQI) is disordered. Residues 386-715 (VKTEQEDVLA…EWYQSTIPQS (330 aa)) form the PDEase domain. K387 participates in a covalent cross-link: Glycyl lysine isopeptide (Lys-Gly) (interchain with G-Cter in SUMO). Catalysis depends on H462, which acts as the Proton donor. H462 serves as a coordination point for 3',5'-cyclic AMP. H462 serves as a coordination point for AMP. Positions 466, 502, 503, and 620 each coordinate Zn(2+). AMP is bound by residues D503, D620, N623, Q671, and F674. Mg(2+) is bound at residue D503. A Mn(2+)-binding site is contributed by D503. Positions 671 and 674 each coordinate 3',5'-cyclic AMP. Disordered stretches follow at residues 710-729 (STIP…GRQG) and 739-809 (TLEE…SPDT). The span at 762-773 (CSDSKTLCTQDS) shows a compositional bias: polar residues. The span at 779–796 (PLDEQVEEEAVGEEEESQ) shows a compositional bias: acidic residues.

This sequence belongs to the cyclic nucleotide phosphodiesterase family. PDE4 subfamily. Homodimer for the long isoforms. Isoforms with truncated N-termini are monomeric. Isoform 3 is part of a ternary complex containing PRKAR2A, PRKAR2B and AKAP9. Interacts with PDE4DIP. Identified in a complex composed of RYR1, PDE4D, PKA, FKBP1A and protein phosphatase 1 (PP1). Isoform 5, isoform N3 and isoform 12 bind RACK1 via their unique N-terminus. Binds ARRB2. Interacts (via N-terminal region) with SHANK2 (via proline-rich region); the interaction is increased in a PKA-dependent manner. It depends on Zn(2+) as a cofactor. Mg(2+) is required as a cofactor. The cofactor is Mn(2+). In terms of processing, long isoforms that share a conserved PKA phosphorylation site in the N-terminus are activated by PKA through phosphorylation. Isoform 3 and isoform 7 are activated by phosphorylation (in vitro), but not isoform 6. Isoform N3 and isoform 12 are phosphorylated on Ser-49, Ser-51, Ser-55 and Ser-59. Post-translationally, sumoylation of long isoforms by PIAS4 augments their activation by PKA phosphorylation and represses their inhibition by ERK phosphorylation. As to expression, expressed in colonic epithelial cells (at protein level). Widespread; most abundant in skeletal muscle. Detected in brain. In terms of tissue distribution, detected in brain, placenta, lung and kidney. As to expression, detected in heart and skeletal muscle.

The protein resides in the apical cell membrane. It localises to the cytoplasm. Its subcellular location is the membrane. It is found in the cytoskeleton. The protein localises to the microtubule organizing center. The protein resides in the centrosome. It catalyses the reaction 3',5'-cyclic AMP + H2O = AMP + H(+). It participates in purine metabolism; 3',5'-cyclic AMP degradation; AMP from 3',5'-cyclic AMP: step 1/1. With respect to regulation, inhibited by rolipram. Activated by phosphatidic acid. In terms of biological role, hydrolyzes the second messenger cAMP, which is a key regulator of many important physiological processes. This Homo sapiens (Human) protein is 3',5'-cyclic-AMP phosphodiesterase 4D.